We begin with the raw amino-acid sequence, 351 residues long: Increased glyphosate resistance protein (351 aa).

Positions 1–18 are enriched in basic and acidic residues; it reads MHREDDSTSTGRREERLS. The tract at residues 1 to 29 is disordered; that stretch reads MHREDDSTSTGRREERLSTGKGDSLQPGP.

Its function is as follows. Confers an increase in glyphosate resistance when expressed in E.coli. The sequence is that of Increased glyphosate resistance protein from Pseudomonas sp. (strain PG2982).